The primary structure comprises 328 residues: Sulfate adenylyltransferase subunit 2 (328 aa).

Disordered regions lie at residues 15–34 (AAPD…PSSH) and 304–328 (SERE…EGYF).

It belongs to the PAPS reductase family. CysD subfamily. As to quaternary structure, heterodimer composed of CysD, the smaller subunit, and CysN.

It carries out the reaction sulfate + ATP + H(+) = adenosine 5'-phosphosulfate + diphosphate. It participates in sulfur metabolism; hydrogen sulfide biosynthesis; sulfite from sulfate: step 1/3. Its function is as follows. With CysN forms the ATP sulfurylase (ATPS) that catalyzes the adenylation of sulfate producing adenosine 5'-phosphosulfate (APS) and diphosphate, the first enzymatic step in sulfur assimilation pathway. APS synthesis involves the formation of a high-energy phosphoric-sulfuric acid anhydride bond driven by GTP hydrolysis by CysN coupled to ATP hydrolysis by CysD. The polypeptide is Sulfate adenylyltransferase subunit 2 (Rhodopseudomonas palustris (strain BisA53)).